Reading from the N-terminus, the 560-residue chain is Solute carrier family 49 member A3 (560 aa).

12 helical membrane-spanning segments follow: residues 30-50, 70-90, 100-120, 125-145, 166-186, 192-212, 250-270, 282-302, 318-338, 341-361, 379-399, and 422-442; these read WVFL…WLSF, WLSL…IWIL, ILGA…CMVV, PFAF…LVIF, LATM…PVLV, IPLM…LSTI, VILA…SALL, GFSG…ALAL, IGLC…QLQG, LALA…GPVA, GMIF…MTAL, and VSLL…AVFF. Positions 451–540 are disordered; sequence AESGEPPSTR…PGRLAGRVQA (90 aa). The span at 466–481 shows a compositional bias: gly residues; it reads ADSGPGVDRGGAGRAG.

It belongs to the major facilitator superfamily.

It is found in the membrane. In Homo sapiens (Human), this protein is Solute carrier family 49 member A3.